We begin with the raw amino-acid sequence, 623 residues long: Glutathione import ATP-binding protein GsiA (623 aa).

2 ABC transporter domains span residues 15–269 (VENL…RALL) and 314–564 (LRVR…RKLL). ATP contacts are provided by residues 49 to 56 (GESGSGKS) and 357 to 364 (GESGSGKS).

The protein belongs to the ABC transporter superfamily. Glutathione importer (TC 3.A.1.5.11) family. In terms of assembly, the complex is composed of two ATP-binding proteins (GsiA), two transmembrane proteins (GsiC and GsiD) and a solute-binding protein (GsiB).

Its subcellular location is the cell inner membrane. The catalysed reaction is glutathione(out) + ATP + H2O = glutathione(in) + ADP + phosphate + H(+). Part of the ABC transporter complex GsiABCD involved in glutathione import. Responsible for energy coupling to the transport system. The protein is Glutathione import ATP-binding protein GsiA of Shigella flexneri serotype 5b (strain 8401).